Here is a 470-residue protein sequence, read N- to C-terminus: 3-isopropylmalate dehydratase large subunit (470 aa).

[4Fe-4S] cluster-binding residues include cysteine 351, cysteine 411, and cysteine 414.

Belongs to the aconitase/IPM isomerase family. LeuC type 1 subfamily. Heterodimer of LeuC and LeuD. [4Fe-4S] cluster is required as a cofactor.

It catalyses the reaction (2R,3S)-3-isopropylmalate = (2S)-2-isopropylmalate. Its pathway is amino-acid biosynthesis; L-leucine biosynthesis; L-leucine from 3-methyl-2-oxobutanoate: step 2/4. Its function is as follows. Catalyzes the isomerization between 2-isopropylmalate and 3-isopropylmalate, via the formation of 2-isopropylmaleate. This is 3-isopropylmalate dehydratase large subunit from Shewanella frigidimarina (strain NCIMB 400).